Reading from the N-terminus, the 527-residue chain is ATP synthase subunit alpha (527 aa).

ATP is bound at residue 172 to 179 (GDRQTGKT).

This sequence belongs to the ATPase alpha/beta chains family. F-type ATPases have 2 components, CF(1) - the catalytic core - and CF(0) - the membrane proton channel. CF(1) has five subunits: alpha(3), beta(3), gamma(1), delta(1), epsilon(1). CF(0) has three main subunits: a(1), b(2) and c(9-12). The alpha and beta chains form an alternating ring which encloses part of the gamma chain. CF(1) is attached to CF(0) by a central stalk formed by the gamma and epsilon chains, while a peripheral stalk is formed by the delta and b chains.

The protein localises to the cell inner membrane. It catalyses the reaction ATP + H2O + 4 H(+)(in) = ADP + phosphate + 5 H(+)(out). Produces ATP from ADP in the presence of a proton gradient across the membrane. The alpha chain is a regulatory subunit. The chain is ATP synthase subunit alpha from Bacteroides thetaiotaomicron (strain ATCC 29148 / DSM 2079 / JCM 5827 / CCUG 10774 / NCTC 10582 / VPI-5482 / E50).